A 295-amino-acid chain; its full sequence is UDP-N-acetylenolpyruvoylglucosamine reductase (295 aa).

An FAD-binding PCMH-type domain is found at 26-189; sequence VGGRADVLFK…VEAEFKGVNS (164 aa). The active site involves arginine 169. Residue cysteine 218 is the Proton donor of the active site. Residue glutamate 288 is part of the active site.

This sequence belongs to the MurB family. Requires FAD as cofactor.

The protein localises to the cytoplasm. The enzyme catalyses UDP-N-acetyl-alpha-D-muramate + NADP(+) = UDP-N-acetyl-3-O-(1-carboxyvinyl)-alpha-D-glucosamine + NADPH + H(+). Its pathway is cell wall biogenesis; peptidoglycan biosynthesis. Functionally, cell wall formation. The chain is UDP-N-acetylenolpyruvoylglucosamine reductase from Wolbachia pipientis wMel.